Here is a 140-residue protein sequence, read N- to C-terminus: C-type lectin 6 (140 aa).

Residues 1 to 23 (MGRLVFVSFGLLVVFLSLSGTGA) form the signal peptide. Intrachain disulfides connect cysteine 25–cysteine 36, cysteine 53–cysteine 138, and cysteine 115–cysteine 130. In terms of domain architecture, C-type lectin spans 32–139 (YEGHCYRVFQ…CSKTHNVICK (108 aa)).

This sequence belongs to the snaclec family. As to quaternary structure, heteromultimer; disulfide-linked. In terms of tissue distribution, expressed by the venom gland.

It localises to the secreted. Functionally, interferes with one step of hemostasis (modulation of platelet aggregation, or coagulation cascade, for example). The chain is C-type lectin 6 from Crotalus adamanteus (Eastern diamondback rattlesnake).